Here is an 83-residue protein sequence, read N- to C-terminus: U1-theraphotoxin-Hs1f (83 aa).

The first 21 residues, 1–21 (MKVTLIAILTCAAVLVLHTTA), serve as a signal peptide directing secretion. A propeptide spanning residues 22 to 48 (AEELEESQLMEVGMPDTELAAVDEERL) is cleaved from the precursor. 3 cysteine pairs are disulfide-bonded: Cys51-Cys64, Cys55-Cys75, and Cys69-Cys80.

Belongs to the neurotoxin 12 (Hwtx-2) family. 02 (Hwtx-2) subfamily. Expressed by the venom gland.

The protein resides in the secreted. In terms of biological role, lethal neurotoxin that blocks neuromuscular transmission. In Cyriopagopus schmidti (Chinese bird spider), this protein is U1-theraphotoxin-Hs1f.